The sequence spans 449 residues: Sensor protein QseC (449 aa).

Residues 1–12 are Cytoplasmic-facing; sequence MKFTQRLSLRVR. The helical transmembrane segment at 13 to 33 threads the bilayer; the sequence is LTLIFLILASVTWLLSSFVAW. The Periplasmic portion of the chain corresponds to 34–156; sequence KQTTDNVDEL…QEWEYREDMA (123 aa). The chain crosses the membrane as a helical span at residues 157–177; the sequence is LAIVAGQLIPWLVALPIMLII. Topologically, residues 178 to 449 are cytoplasmic; it reads MMVLLGRELA…QGGFEAKVSW (272 aa). Residues 243–449 form the Histidine kinase domain; the sequence is DAAHELRSPL…QGGFEAKVSW (207 aa). Histidine 246 is modified (phosphohistidine; by autocatalysis).

It is found in the cell inner membrane. It catalyses the reaction ATP + protein L-histidine = ADP + protein N-phospho-L-histidine.. Member of a two-component regulatory system QseB/QseC. Activates the flagella regulon by activating transcription of FlhDC. May activate QseB by phosphorylation. This chain is Sensor protein QseC (qseC), found in Escherichia coli (strain K12).